The sequence spans 837 residues: Intestinal mucin-like protein (837 aa).

4 tandem repeats follow at residues 17–27, 28–38, 39–50, and 51–62. The interval 17-70 is 5 X 11 AA approximate tandem repeats; that stretch reads PSTPSTPPPSTPTTPTSSQTTTPSTPSTTSSKSTPSTPQSTSSKSTPSTPPKTT. A disordered region spans residues 17-75; it reads PSTPSTPPPSTPTTPTSSQTTTPSTPSTTSSKSTPSTPQSTSSKSTPSTPPKTTLPGCL. The span at 29-70 shows a compositional bias: low complexity; the sequence is TTPTSSQTTTPSTPSTTSSKSTPSTPQSTSSKSTPSTPPKTT. The 5; truncated repeat unit spans residues 63–70; it reads PSTPPKTT. N-linked (GlcNAc...) asparagine glycans are attached at residues asparagine 91 and asparagine 164. In terms of domain architecture, VWFD spans 141 to 324; it reads CYCTGWGDPH…VNDPSKPHCP (184 aa). 3 disulfides stabilise this stretch: cysteine 143–cysteine 284, cysteine 165–cysteine 323, and cysteine 189–cysteine 197. A probably important for disulfide-bond mediated mucin polymerization (link domain) region spans residues 149 to 837; sequence PHFVTFDGLY…RSSPRLLGRK (689 aa). N-linked (GlcNAc...) asparagine glycosylation is found at asparagine 278, asparagine 289, asparagine 344, asparagine 410, asparagine 444, asparagine 515, asparagine 538, asparagine 612, asparagine 627, asparagine 695, asparagine 727, and asparagine 749. VWFC domains follow at residues 472–543 and 581–648; these read CGCV…TSCK and GVCV…KKCQ. 4 cysteine pairs are disulfide-bonded: cysteine 732–cysteine 779, cysteine 746–cysteine 793, cysteine 755–cysteine 809, and cysteine 759–cysteine 811. Positions 732-817 constitute a CTCK domain; the sequence is CSAIPVMKEI…SCLCQGTVCE (86 aa).

As to quaternary structure, multimeric. Coats the epithelia of the intestines.

It localises to the secreted. The sequence is that of Intestinal mucin-like protein from Rattus norvegicus (Rat).